Reading from the N-terminus, the 323-residue chain is NAC transcription factor 25 (323 aa).

The region spanning 16–177 (LPPGFRFHPT…DWVLCRIYKK (162 aa)) is the NAC domain. Residues 114–183 (VGVKKALVFY…IYKKNSSQRP (70 aa)) mediate DNA binding. Positions 201 to 221 (KSSANSSSTSVLDNNDNNNNN) are enriched in low complexity. The segment at 201–223 (KSSANSSSTSVLDNNDNNNNNNE) is disordered.

As to expression, expressed specifically in the tapetum.

It is found in the nucleus. Its function is as follows. Transcription factor of the NAC family. May be associated with anther development and pollen production. Required for normal seed development and morphology. This Arabidopsis thaliana (Mouse-ear cress) protein is NAC transcription factor 25 (NAC025).